The chain runs to 452 residues: Elongation factor Tu, mitochondrial (452 aa).

The N-terminal 43 residues, 1 to 43, are a transit peptide targeting the mitochondrion; that stretch reads MAAATLLRATPLFSGLGAGPAPLLQGLLRPLKAQALPVLCRGL. The region spanning 55 to 251 is the tr-type G domain; the sequence is KPHVNVGTIG…AVDTYIPVPT (197 aa). The interval 64 to 71 is G1; the sequence is GHVDHGKT. Residues Asp-67, Gly-69, Lys-70, Thr-71, and Thr-72 each coordinate GTP. Residue Thr-71 participates in Mg(2+) binding. At Lys-79 the chain carries N6-acetyllysine. Lys-88 carries the post-translational modification N6-acetyllysine; alternate. Position 88 is an N6-succinyllysine; alternate (Lys-88). Residues 105 to 109 are G2; the sequence is GITIN. The G3 stretch occupies residues 126–129; sequence DCPG. The GTP site is built by Asn-181, Asp-184, Ser-219, Ala-220, and Leu-221. Residues 181 to 184 form a G4 region; sequence NKAD. Residues 219–221 are G5; it reads SAL. Lys-234 carries the N6-succinyllysine modification. At Lys-256 the chain carries N6-acetyllysine. Position 278 is a phosphothreonine (Thr-278). Residue Lys-286 is modified to N6-succinyllysine. Ser-312 is modified (phosphoserine). Residues Lys-361 and Lys-418 each carry the N6-acetyllysine modification.

It belongs to the TRAFAC class translation factor GTPase superfamily. Classic translation factor GTPase family. EF-Tu/EF-1A subfamily. In terms of assembly, interacts with NLRX1. Interacts with ATG16L1.

The protein localises to the mitochondrion. It catalyses the reaction GTP + H2O = GDP + phosphate + H(+). GTP hydrolase that promotes the GTP-dependent binding of aminoacyl-tRNA to the A-site of ribosomes during protein biosynthesis. Also plays a role in the regulation of autophagy and innate immunity. Recruits ATG5-ATG12 and NLRX1 at mitochondria and serves as a checkpoint of the RIGI-MAVS pathway. In turn, inhibits RLR-mediated type I interferon while promoting autophagy. The protein is Elongation factor Tu, mitochondrial (TUFM) of Bos taurus (Bovine).